The sequence spans 305 residues: Heme A synthase (305 aa).

The Cytoplasmic segment spans residues methionine 1 to lysine 6. Residues valine 7–threonine 27 form a helical membrane-spanning segment. Over lysine 28–arginine 63 the chain is Extracellular. Cysteine 35 and cysteine 42 form a disulfide bridge. Glutamate 59 is an active-site residue. Histidine 62 serves as a coordination point for heme o. The helical transmembrane segment at methionine 64–methionine 84 threads the bilayer. At lysine 85–proline 92 the chain is on the cytoplasmic side. A helical membrane pass occupies residues leucine 93–valine 113. The Extracellular portion of the chain corresponds to tryptophan 114–alanine 122. Residues leucine 123–phenylalanine 143 traverse the membrane as a helical segment. Histidine 124 serves as a coordination point for heme o. The Cytoplasmic portion of the chain corresponds to glutamate 144 to leucine 160. Residues arginine 161–valine 181 traverse the membrane as a helical segment. The Extracellular portion of the chain corresponds to arginine 182 to tyrosine 212. Residues phenylalanine 213–phenylalanine 233 form a helical membrane-spanning segment. Histidine 214 is a binding site for heme b. The Cytoplasmic segment spans residues arginine 234–arginine 240. A helical membrane pass occupies residues valine 241–alanine 261. The Extracellular segment spans residues leucine 262–tyrosine 271. A helical transmembrane segment spans residues isoleucine 272–leucine 292. Histidine 276 provides a ligand contact to heme b. The Cytoplasmic portion of the chain corresponds to leucine 293–lysine 305.

This sequence belongs to the COX15/CtaA family. Type 1 subfamily. As to quaternary structure, interacts with CtaB. Heme b serves as cofactor.

The protein resides in the cell membrane. The enzyme catalyses Fe(II)-heme o + 2 A + H2O = Fe(II)-heme a + 2 AH2. It participates in porphyrin-containing compound metabolism; heme A biosynthesis; heme A from heme O: step 1/1. Functionally, catalyzes the conversion of heme O to heme A by two successive hydroxylations of the methyl group at C8. The first hydroxylation forms heme I, the second hydroxylation results in an unstable dihydroxymethyl group, which spontaneously dehydrates, resulting in the formyl group of heme A. The protein is Heme A synthase of Listeria monocytogenes serovar 1/2a (strain ATCC BAA-679 / EGD-e).